We begin with the raw amino-acid sequence, 1028 residues long: Unconventional myosin-Ic (1028 aa).

The residue at position 1 (methionine 1) is an N-acetylmethionine. One can recognise a Myosin motor domain in the interval 12–696 (GVQDFVLLEN…TLFATEDALE (685 aa)). Residues asparagine 53, tyrosine 61, 104-113 (SGESGAGKTE), and 157-161 (NDNSS) each bind ATP. Lysine 348 carries the post-translational modification N6-methyllysine. Positions 573 to 595 (LSKLMEILMSKEPSYIRCIKPND) are actin-binding. 2 consecutive IQ domains span residues 699-728 (KQSL…SAIA) and 722-751 (MKHS…AVQT). The TH1 domain maps to 850 to 1024 (KDNYPQSVPR…NGHLTVVAPR (175 aa)).

This sequence belongs to the TRAFAC class myosin-kinesin ATPase superfamily. Myosin family. In terms of assembly, interacts (via its IQ motifs) with CALM.

The protein resides in the cytoplasm. It localises to the cell cortex. Its subcellular location is the cell projection. The protein localises to the ruffle membrane. It is found in the cytoplasmic vesicle. The protein resides in the stereocilium membrane. Myosins are actin-based motor molecules with ATPase activity. Unconventional myosins serve in intracellular movements. Their highly divergent tails are presumed to bind to membranous compartments, which would be moved relative to actin filaments. The protein is Unconventional myosin-Ic (MYO1C) of Gallus gallus (Chicken).